Consider the following 126-residue polypeptide: Small ribosomal subunit protein uS13 (126 aa).

A disordered region spans residues 99–126 (LRGQSTKNNARTRKGKKKTVANKKKATK). The span at 108 to 126 (ARTRKGKKKTVANKKKATK) shows a compositional bias: basic residues.

The protein belongs to the universal ribosomal protein uS13 family. In terms of assembly, part of the 30S ribosomal subunit. Forms a loose heterodimer with protein S19. Forms two bridges to the 50S subunit in the 70S ribosome.

Located at the top of the head of the 30S subunit, it contacts several helices of the 16S rRNA. In the 70S ribosome it contacts the 23S rRNA (bridge B1a) and protein L5 of the 50S subunit (bridge B1b), connecting the 2 subunits; these bridges are implicated in subunit movement. Contacts the tRNAs in the A and P-sites. This is Small ribosomal subunit protein uS13 from Porphyromonas gingivalis (strain ATCC 33277 / DSM 20709 / CIP 103683 / JCM 12257 / NCTC 11834 / 2561).